The primary structure comprises 70 residues: Putative membrane protein insertion efficiency factor (70 aa).

The protein belongs to the UPF0161 family.

It localises to the cell membrane. In terms of biological role, could be involved in insertion of integral membrane proteins into the membrane. This chain is Putative membrane protein insertion efficiency factor, found in Chloroflexus aurantiacus (strain ATCC 29366 / DSM 635 / J-10-fl).